The following is a 1037-amino-acid chain: Mediator of RNA polymerase II transcription subunit 14 (1037 aa).

It belongs to the Mediator complex subunit 14 family. Component of the Mediator complex.

It localises to the nucleus. Functionally, component of the Mediator complex, a coactivator involved in the regulated transcription of nearly all RNA polymerase II-dependent genes. Mediator functions as a bridge to convey information from gene-specific regulatory proteins to the basal RNA polymerase II transcription machinery. Mediator is recruited to promoters by direct interactions with regulatory proteins and serves as a scaffold for the assembly of a functional preinitiation complex with RNA polymerase II and the general transcription factors. This Candida glabrata (strain ATCC 2001 / BCRC 20586 / JCM 3761 / NBRC 0622 / NRRL Y-65 / CBS 138) (Yeast) protein is Mediator of RNA polymerase II transcription subunit 14 (RGR1).